Here is a 264-residue protein sequence, read N- to C-terminus: Thymidylate synthase (264 aa).

Residue arginine 21 participates in dUMP binding. (6R)-5,10-methylene-5,6,7,8-tetrahydrofolate is bound at residue histidine 51. 126 to 127 is a dUMP binding site; it reads RR. Cysteine 146 (nucleophile) is an active-site residue. DUMP-binding positions include 166–169, asparagine 177, and 207–209; these read RSAD and HLY. A (6R)-5,10-methylene-5,6,7,8-tetrahydrofolate-binding site is contributed by aspartate 169. Alanine 263 provides a ligand contact to (6R)-5,10-methylene-5,6,7,8-tetrahydrofolate.

This sequence belongs to the thymidylate synthase family. Bacterial-type ThyA subfamily. As to quaternary structure, homodimer.

It is found in the cytoplasm. The enzyme catalyses dUMP + (6R)-5,10-methylene-5,6,7,8-tetrahydrofolate = 7,8-dihydrofolate + dTMP. It functions in the pathway pyrimidine metabolism; dTTP biosynthesis. Its function is as follows. Catalyzes the reductive methylation of 2'-deoxyuridine-5'-monophosphate (dUMP) to 2'-deoxythymidine-5'-monophosphate (dTMP) while utilizing 5,10-methylenetetrahydrofolate (mTHF) as the methyl donor and reductant in the reaction, yielding dihydrofolate (DHF) as a by-product. This enzymatic reaction provides an intracellular de novo source of dTMP, an essential precursor for DNA biosynthesis. This is Thymidylate synthase from Bartonella henselae (strain ATCC 49882 / DSM 28221 / CCUG 30454 / Houston 1) (Rochalimaea henselae).